A 509-amino-acid polypeptide reads, in one-letter code: Pituitary homeobox homolog Ptx1 (509 aa).

The segment covering 70–98 has biased composition (low complexity); that stretch reads NGAGSAGSAESATTTSTALSSGSTGSSTV. Disordered regions lie at residues 70-125, 148-171, and 204-273; these read NGAG…SSVS, QDLV…PKHE, and LNNF…HFTS. Residues 227–242 show a composition bias toward polar residues; it reads RSVNETTIKTENISSS. A compositionally biased stretch (basic and acidic residues) spans 243–258; the sequence is GHDEPMTTSGEEPKND. A compositionally biased stretch (basic residues) spans 259–269; the sequence is KKNKRQRRQRT. Positions 262 to 322 form a DNA-binding region, homeobox; sequence KRQRRQRTHF…KNRRAKWRKR (61 aa). Residues 460–473 carry the OAR motif; sequence SSIATLRLKAKQHA. Positions 464-470 match the Nuclear localization signal motif; sequence TLRLKAK.

Belongs to the paired homeobox family. Bicoid subfamily.

It is found in the nucleus. Its function is as follows. Appears to control physiological cell functions rather than pattern formation during embryogenesis. In Drosophila melanogaster (Fruit fly), this protein is Pituitary homeobox homolog Ptx1 (Ptx1).